The primary structure comprises 243 residues: Ribonuclease 3 (243 aa).

An RNase III domain is found at 10 to 146; sequence INRFRKRFDT…FIGALYLDQG (137 aa). Glu-59 lines the Mg(2+) pocket. Asp-63 is an active-site residue. Mg(2+) is bound by residues Asp-132 and Glu-135. The active site involves Glu-135. The 70-residue stretch at 172-241 folds into the DRBM domain; that stretch reads DFKTQFQEYV…AESAYKQLKQ (70 aa). The segment covering 219–231 has biased composition (basic and acidic residues); sequence GKGKTKKESEQRA. Residues 219-243 form a disordered region; the sequence is GKGKTKKESEQRAAESAYKQLKQIK.

The protein belongs to the ribonuclease III family. In terms of assembly, homodimer. Mg(2+) is required as a cofactor.

It is found in the cytoplasm. The enzyme catalyses Endonucleolytic cleavage to 5'-phosphomonoester.. Functionally, digests double-stranded RNA. Involved in the processing of primary rRNA transcript to yield the immediate precursors to the large and small rRNAs (23S and 16S). Processes some mRNAs, and tRNAs when they are encoded in the rRNA operon. Processes pre-crRNA and tracrRNA of type II CRISPR loci if present in the organism. The polypeptide is Ribonuclease 3 (Staphylococcus aureus (strain bovine RF122 / ET3-1)).